The sequence spans 307 residues: Acetyl-coenzyme A carboxylase carboxyl transferase subunit beta (307 aa).

The 270-residue stretch at 28 to 297 folds into the CoA carboxyltransferase N-terminal domain; that stretch reads LWVKCPDTGQ…TPEPGTAPEP (270 aa). The tract at residues 286–307 is disordered; sequence RRTPEPGTAPEPTTPEPLPNAA. Residues 292 to 307 are compositionally biased toward pro residues; it reads GTAPEPTTPEPLPNAA.

It belongs to the AccD/PCCB family. As to quaternary structure, acetyl-CoA carboxylase is a heterohexamer composed of biotin carboxyl carrier protein (AccB), biotin carboxylase (AccC) and two subunits each of ACCase subunit alpha (AccA) and ACCase subunit beta (AccD).

The protein localises to the cytoplasm. It carries out the reaction N(6)-carboxybiotinyl-L-lysyl-[protein] + acetyl-CoA = N(6)-biotinyl-L-lysyl-[protein] + malonyl-CoA. The protein operates within lipid metabolism; malonyl-CoA biosynthesis; malonyl-CoA from acetyl-CoA: step 1/1. In terms of biological role, component of the acetyl coenzyme A carboxylase (ACC) complex. Biotin carboxylase (BC) catalyzes the carboxylation of biotin on its carrier protein (BCCP) and then the CO(2) group is transferred by the transcarboxylase to acetyl-CoA to form malonyl-CoA. This Methylorubrum extorquens (strain ATCC 14718 / DSM 1338 / JCM 2805 / NCIMB 9133 / AM1) (Methylobacterium extorquens) protein is Acetyl-coenzyme A carboxylase carboxyl transferase subunit beta.